A 406-amino-acid polypeptide reads, in one-letter code: Tryptophan synthase beta chain (406 aa).

At K99 the chain carries N6-(pyridoxal phosphate)lysine.

This sequence belongs to the TrpB family. Tetramer of two alpha and two beta chains. The cofactor is pyridoxal 5'-phosphate.

The catalysed reaction is (1S,2R)-1-C-(indol-3-yl)glycerol 3-phosphate + L-serine = D-glyceraldehyde 3-phosphate + L-tryptophan + H2O. It participates in amino-acid biosynthesis; L-tryptophan biosynthesis; L-tryptophan from chorismate: step 5/5. Its function is as follows. The beta subunit is responsible for the synthesis of L-tryptophan from indole and L-serine. In Sinorhizobium fredii (strain NBRC 101917 / NGR234), this protein is Tryptophan synthase beta chain.